The primary structure comprises 629 residues: Arginyl-tRNA--protein transferase 1 (629 aa).

2 disordered regions span residues 274–298 (QNNSNKNSTTTATTATTTTTTTNEP) and 353–405 (PDES…ITKE). The segment covering 282–295 (TTTATTATTTTTTT) has biased composition (low complexity). Positions 356-396 (SYDDYVYDGKDDDDDDDDKDEKEDDEDEDQEDDEDEDDGNN) are enriched in acidic residues.

This sequence belongs to the R-transferase family.

The enzyme catalyses an N-terminal L-alpha-aminoacyl-[protein] + L-arginyl-tRNA(Arg) = an N-terminal L-arginyl-L-aminoacyl-[protein] + tRNA(Arg) + H(+). Involved in the post-translational conjugation of arginine to the N-terminal aspartate or glutamate of a protein. This arginylation is required for degradation of the protein via the ubiquitin pathway. Does not arginylate cysteine residues. In Dictyostelium discoideum (Social amoeba), this protein is Arginyl-tRNA--protein transferase 1 (ate1).